The chain runs to 409 residues: MVDRWYNIAADLPAVLAPPKDPDEGESRIGLLTRILPSALIDQEFSAERWITVPEEVRDAYRRVGRPTPLLRAEGLERALGTGVRIYYKYEGVLPVGSHKLNTALAQAYYAKADGAVEVATETGAGQWGMAVSLAAALFGLKAVVFMTRSSYNSKRQRLTFMRTYGATVYPSPSEVTEAGRRHYRPDHPGSLGIAISEAVEYVLSGEKRHYLPGSVLEFVLMHQTVIGLEAVRQLPEEPDAAVACVGGGSNFAGFTYPMIGMKLRGEGFDKTRFVAVEAEAAPKLTKGEYKYDFPDAVGILPMIKMYTLGHDYVPPPVHAAGLRYHGAAPSLSLLRKLGIVEPLSYPQEEVMKAAVLFARTEGIVPAPESAHAIRAVLDLAKKLPRGSVIAFNLSGHGLLDSDAYEKFL.

Lys-100 carries the post-translational modification N6-(pyridoxal phosphate)lysine.

This sequence belongs to the TrpB family. As to quaternary structure, tetramer of two alpha and two beta chains. Requires pyridoxal 5'-phosphate as cofactor.

The catalysed reaction is (1S,2R)-1-C-(indol-3-yl)glycerol 3-phosphate + L-serine = D-glyceraldehyde 3-phosphate + L-tryptophan + H2O. Its pathway is amino-acid biosynthesis; L-tryptophan biosynthesis; L-tryptophan from chorismate: step 5/5. Its function is as follows. The beta subunit is responsible for the synthesis of L-tryptophan from indole and L-serine. This Pyrobaculum arsenaticum (strain DSM 13514 / JCM 11321 / PZ6) protein is Tryptophan synthase beta chain.